Reading from the N-terminus, the 315-residue chain is BTB/POZ domain-containing adapter for CUL3-mediated RhoA degradation protein 3 (315 aa).

Met-1 is subject to N-acetylmethionine. At Ser-23 the chain carries Phosphoserine. A BTB domain is found at 32 to 100 (KYVKLNVGGA…LRDGGVPLPE (69 aa)). Positions 239 to 245 (QTKVEFP) match the PCNA-binding motif. The tract at residues 269-294 (NALLEATGGAAGRSHHLDEDEERERE) is disordered.

It belongs to the BACURD family. Homotetramer; forms a two-fold symmetric tetramer in solution. Interacts with CUL3; interaction is direct and forms a 5:5 heterodecamer. Component of the BCR(BACURD3) E3 ubiquitin ligase complex, at least composed of CUL3, KCTD10/BACURD3 and RBX1. Interacts with DNA polymerase delta subunit 2/POLD2. Interacts with PCNA. Associated with the tectonic-like complex (also named B9 complex); however as Kctd10 has not been identified in all tectonic-like complexes purifications it is unclear whether it is really part of the complex.

It is found in the nucleus. Its pathway is protein modification; protein ubiquitination. Its function is as follows. Substrate-specific adapter of a BCR (BTB-CUL3-RBX1) E3 ubiquitin-protein ligase complex. The BCR(BACURD3) E3 ubiquitin ligase complex mediates the ubiquitination of target proteins, leading to their degradation by the proteasome. The protein is BTB/POZ domain-containing adapter for CUL3-mediated RhoA degradation protein 3 (Kctd10) of Mus musculus (Mouse).